The sequence spans 281 residues: Phytanoyl-CoA dioxygenase 1 (281 aa).

Residues Lys-98, Met-137, 152-154 (HQD), and Trp-169 each bind 2-oxoglutarate. His-152 and Asp-154 together coordinate Fe cation. His-237 lines the Fe cation pocket. Residues Ser-239 and Arg-248 each contribute to the 2-oxoglutarate site.

It belongs to the PhyH family. It depends on Fe cation as a cofactor. L-ascorbate is required as a cofactor.

The catalysed reaction is phytanoyl-CoA + 2-oxoglutarate + O2 = 2-hydroxyphytanoyl-CoA + succinate + CO2. The protein operates within lipid metabolism; fatty acid metabolism. Its function is as follows. Converts phytanoyl-CoA to 2-hydroxyphytanoyl-CoA. In Oryza sativa subsp. japonica (Rice), this protein is Phytanoyl-CoA dioxygenase 1.